A 483-amino-acid chain; its full sequence is Glutamyl-tRNA(Gln) amidotransferase subunit A (483 aa).

Catalysis depends on charge relay system residues K76 and S151. The Acyl-ester intermediate role is filled by S175.

The protein belongs to the amidase family. GatA subfamily. In terms of assembly, heterotrimer of A, B and C subunits.

It carries out the reaction L-glutamyl-tRNA(Gln) + L-glutamine + ATP + H2O = L-glutaminyl-tRNA(Gln) + L-glutamate + ADP + phosphate + H(+). Allows the formation of correctly charged Gln-tRNA(Gln) through the transamidation of misacylated Glu-tRNA(Gln) in organisms which lack glutaminyl-tRNA synthetase. The reaction takes place in the presence of glutamine and ATP through an activated gamma-phospho-Glu-tRNA(Gln). This Pseudomonas putida (strain ATCC 700007 / DSM 6899 / JCM 31910 / BCRC 17059 / LMG 24140 / F1) protein is Glutamyl-tRNA(Gln) amidotransferase subunit A.